The following is a 129-amino-acid chain: Glycine cleavage system H protein (129 aa).

The Lipoyl-binding domain maps to 24 to 106 (TYTVGITEHA…YTDGWIFKIR (83 aa)). Lysine 65 is subject to N6-lipoyllysine.

The protein belongs to the GcvH family. The glycine cleavage system is composed of four proteins: P, T, L and H. (R)-lipoate is required as a cofactor.

Functionally, the glycine cleavage system catalyzes the degradation of glycine. The H protein shuttles the methylamine group of glycine from the P protein to the T protein. This Enterobacter sp. (strain 638) protein is Glycine cleavage system H protein.